An 89-amino-acid polypeptide reads, in one-letter code: Small ribosomal subunit protein uS15 (89 aa).

It belongs to the universal ribosomal protein uS15 family. Part of the 30S ribosomal subunit. Forms a bridge to the 50S subunit in the 70S ribosome, contacting the 23S rRNA.

Functionally, one of the primary rRNA binding proteins, it binds directly to 16S rRNA where it helps nucleate assembly of the platform of the 30S subunit by binding and bridging several RNA helices of the 16S rRNA. Its function is as follows. Forms an intersubunit bridge (bridge B4) with the 23S rRNA of the 50S subunit in the ribosome. The protein is Small ribosomal subunit protein uS15 of Orientia tsutsugamushi (strain Ikeda) (Rickettsia tsutsugamushi).